The sequence spans 253 residues: Sulfate transporter CysZ (253 aa).

4 helical membrane-spanning segments follow: residues phenylalanine 27–valine 47, isoleucine 71–valine 91, leucine 150–phenylalanine 170, and isoleucine 211–alanine 231.

It belongs to the CysZ family.

It localises to the cell inner membrane. Its function is as follows. High affinity, high specificity proton-dependent sulfate transporter, which mediates sulfate uptake. Provides the sulfur source for the cysteine synthesis pathway. This Pseudomonas syringae pv. tomato (strain ATCC BAA-871 / DC3000) protein is Sulfate transporter CysZ.